Reading from the N-terminus, the 92-residue chain is Large ribosomal subunit protein eL43 (92 aa).

The C4-type zinc-finger motif lies at 39 to 60 (CQFCGKDAMKRQAVGIWGCKSC).

Belongs to the eukaryotic ribosomal protein eL43 family.

The protein is Large ribosomal subunit protein eL43 (RPL37A) of Cryptochiton stelleri (Giant gumboot chiton).